A 346-amino-acid chain; its full sequence is Elongation factor Ts (346 aa).

The involved in Mg(2+) ion dislocation from EF-Tu stretch occupies residues 80 to 83; sequence TDFV.

It belongs to the EF-Ts family.

It is found in the cytoplasm. In terms of biological role, associates with the EF-Tu.GDP complex and induces the exchange of GDP to GTP. It remains bound to the aminoacyl-tRNA.EF-Tu.GTP complex up to the GTP hydrolysis stage on the ribosome. The chain is Elongation factor Ts from Streptococcus suis (strain 98HAH33).